Reading from the N-terminus, the 209-residue chain is Large ribosomal subunit protein uL3 (209 aa).

A disordered region spans residues 144–165 (GSMGAASDPSRTFKNKKMPGHM).

It belongs to the universal ribosomal protein uL3 family. As to quaternary structure, part of the 50S ribosomal subunit. Forms a cluster with proteins L14 and L19.

One of the primary rRNA binding proteins, it binds directly near the 3'-end of the 23S rRNA, where it nucleates assembly of the 50S subunit. In Clostridium novyi (strain NT), this protein is Large ribosomal subunit protein uL3.